Here is a 481-residue protein sequence, read N- to C-terminus: Glutamyl-tRNA(Gln) amidotransferase subunit A (481 aa).

Catalysis depends on charge relay system residues Lys79 and Ser154. Positions 136–157 (SAFGATKNPRNPEHVPGGSSGG) are disordered. The Acyl-ester intermediate role is filled by Ser178.

The protein belongs to the amidase family. GatA subfamily. As to quaternary structure, heterotrimer of A, B and C subunits.

The catalysed reaction is L-glutamyl-tRNA(Gln) + L-glutamine + ATP + H2O = L-glutaminyl-tRNA(Gln) + L-glutamate + ADP + phosphate + H(+). Its function is as follows. Allows the formation of correctly charged Gln-tRNA(Gln) through the transamidation of misacylated Glu-tRNA(Gln) in organisms which lack glutaminyl-tRNA synthetase. The reaction takes place in the presence of glutamine and ATP through an activated gamma-phospho-Glu-tRNA(Gln). The polypeptide is Glutamyl-tRNA(Gln) amidotransferase subunit A (Lachnospira eligens (strain ATCC 27750 / DSM 3376 / VPI C15-48 / C15-B4) (Eubacterium eligens)).